Here is an 82-residue protein sequence, read N- to C-terminus: Small ribosomal subunit protein bS16 (82 aa).

This sequence belongs to the bacterial ribosomal protein bS16 family.

This Deinococcus geothermalis (strain DSM 11300 / CIP 105573 / AG-3a) protein is Small ribosomal subunit protein bS16.